We begin with the raw amino-acid sequence, 268 residues long: MERYESLFAQLKERKEGAFVPFVTLRDPGIEQSLKIIDTLIEAGADALELGIPFSDPLADGPTIQNATLRAFAAGVTPAQCFEMLALIRQKHPTIPIGLLMYANLVFNKGIDEFYAQCEKVGVDSVLVADVPVEESAPFRQAALRHNVAPIFICPPNADDDLLRQIASYGRGYTYLLSRAGVTGAENRAALPLNHLVAKLKEYNAAPPLQGFGISAPDQVKAAIDAGAAGAISGSAIVKIIEQHINEPEKMLAALKVFVQPMKAATRS.

Catalysis depends on proton acceptor residues Glu49 and Asp60.

Belongs to the TrpA family. Tetramer of two alpha and two beta chains.

It carries out the reaction (1S,2R)-1-C-(indol-3-yl)glycerol 3-phosphate + L-serine = D-glyceraldehyde 3-phosphate + L-tryptophan + H2O. Its pathway is amino-acid biosynthesis; L-tryptophan biosynthesis; L-tryptophan from chorismate: step 5/5. Its function is as follows. The alpha subunit is responsible for the aldol cleavage of indoleglycerol phosphate to indole and glyceraldehyde 3-phosphate. This Shigella boydii serotype 4 (strain Sb227) protein is Tryptophan synthase alpha chain.